We begin with the raw amino-acid sequence, 541 residues long: Chaperonin GroEL (541 aa).

ATP contacts are provided by residues 29 to 32 (TLGP), 86 to 90 (DGTTT), Gly-413, 476 to 478 (NAA), and Asp-492.

This sequence belongs to the chaperonin (HSP60) family. Forms a cylinder of 14 subunits composed of two heptameric rings stacked back-to-back. Interacts with the co-chaperonin GroES.

The protein resides in the cytoplasm. The catalysed reaction is ATP + H2O + a folded polypeptide = ADP + phosphate + an unfolded polypeptide.. Functionally, together with its co-chaperonin GroES, plays an essential role in assisting protein folding. The GroEL-GroES system forms a nano-cage that allows encapsulation of the non-native substrate proteins and provides a physical environment optimized to promote and accelerate protein folding. The sequence is that of Chaperonin GroEL from Enterococcus faecalis (strain ATCC 700802 / V583).